A 425-amino-acid chain; its full sequence is O-methyltransferase AMT9 (425 aa).

S-adenosyl-L-methionine is bound by residues 257–258 (GG), D280, 306–307 (DF), R322, and R323. The Proton acceptor role is filled by H326.

This sequence belongs to the class I-like SAM-binding methyltransferase superfamily. Cation-independent O-methyltransferase family.

Its pathway is mycotoxin biosynthesis. Its function is as follows. O-methyltransferase; part of the gene clusters that mediate the biosynthesis of AM-toxins, host-selective toxins (HSTs) causing Alternaria blotch on apple, a worldwide distributed disease. AM-toxins are cyclic depsipeptides containing the 3 residues 2-hydroxy-isovaleric acid (2-HIV), dehydroalanine, L-alanine which are common for all 3 AM-toxins I to III. The fourth precursor is L-alpha-amino-methoxyphenyl-valeric acid (L-Amv) for AM-toxin I, L-alpha-amino-phenyl-valeric acid (L-Apv) for AM-toxin II, and L-alpha-amino-hydroxyphenyl-valeric acid (L-Ahv) for AM-toxin III. AM-toxins have two target sites for affecting susceptible apple cells; they cause invagination of the plasma membrane and electrolyte loss and chloroplast disorganization. The non-ribosomal peptide synthetase AMT1 contains 4 catalytic modules and is responsible for activation of each residue in AM-toxin. The aldo-keto reductase AMT2 catalyzes the conversion of 2-keto-isovaleric acid (2-KIV) to 2-hydroxy-isovaleric acid (2-HIV), one of the precursor residues incorporated by AMT1 during AM-toxin biosynthesis, by reduction of its ketone to an alcohol. The cytochrome P450 monooxygenase AMT3 and the thioesterase AMT4 are also important for AM-toxin production, but their exact function within the AM-toxin biosynthesis are not known yet. Up to 21 proteins (including AMT1 to AMT4) are predicted to be involved in AM-toxin biosynthesis since their expression ishighly up-regulated in AM-toxin-producing cultures. The polypeptide is O-methyltransferase AMT9 (Alternaria alternata (Alternaria rot fungus)).